A 259-amino-acid chain; its full sequence is Zinc import ATP-binding protein ZnuC (259 aa).

An ABC transporter domain is found at 6 to 223 (VTVQSVSVTL…PAYHELFGPG (218 aa)). 38–45 (GPNGAGKS) provides a ligand contact to ATP. The tract at residues 230 to 259 (ALYTHDHDHDHDLHGNATHSHDHNGPCNHD) is disordered. Basic and acidic residues predominate over residues 233 to 259 (THDHDHDHDLHGNATHSHDHNGPCNHD).

This sequence belongs to the ABC transporter superfamily. Zinc importer (TC 3.A.1.15.5) family. As to quaternary structure, the complex is composed of two ATP-binding proteins (ZnuC), two transmembrane proteins (ZnuB) and a solute-binding protein (ZnuA).

The protein resides in the cell inner membrane. The enzyme catalyses Zn(2+)(out) + ATP(in) + H2O(in) = Zn(2+)(in) + ADP(in) + phosphate(in) + H(+)(in). Its function is as follows. Part of the ABC transporter complex ZnuABC involved in zinc import. Responsible for energy coupling to the transport system. The polypeptide is Zinc import ATP-binding protein ZnuC (Alcanivorax borkumensis (strain ATCC 700651 / DSM 11573 / NCIMB 13689 / SK2)).